Here is an 810-residue protein sequence, read N- to C-terminus: DNA replication licensing factor mcm-6 (810 aa).

One can recognise an MCM domain in the interval Ile-346–Ile-553. ATP is bound by residues Ser-400, Thr-401, Ala-402, Lys-403, Ser-404, and Asn-505. Positions Ser-529–Asp-532 match the Arginine finger motif. Residues Arg-622 and Glu-625 each coordinate ADP. The segment at Lys-685–Lys-705 is disordered.

Belongs to the MCM family. As to quaternary structure, component of the mcm2-7 complex. The complex forms a toroidal hexameric ring with the proposed subunit order mcm2-mcm6-mcm4-mcm7-mcm3-mcm5 (By simililarity).

It is found in the nucleus. The enzyme catalyses ATP + H2O = ADP + phosphate + H(+). Functionally, acts as a component of the MCM2-7 complex (MCM complex) which is the replicative helicase essential for 'once per cell cycle' DNA replication initiation and elongation in eukaryotic cells. Core component of CDC45-MCM-GINS (CMG) helicase, the molecular machine that unwinds template DNA during replication, and around which the replisome is built. The active ATPase sites in the MCM2-7 ring are formed through the interaction surfaces of two neighboring subunits such that a critical structure of a conserved arginine finger motif is provided in trans relative to the ATP-binding site of the Walker A box of the adjacent subunit. The six ATPase active sites, however, are likely to contribute differentially to the complex helicase activity. This chain is DNA replication licensing factor mcm-6, found in Caenorhabditis briggsae.